The sequence spans 282 residues: Putative 4-diphosphocytidyl-2-C-methyl-D-erythritol kinase (282 aa).

Lys-10 is a catalytic residue. An ATP-binding site is contributed by 94-104 (PICAGLGGGSS). Asp-136 is a catalytic residue.

Belongs to the GHMP kinase family. IspE subfamily.

The catalysed reaction is 4-CDP-2-C-methyl-D-erythritol + ATP = 4-CDP-2-C-methyl-D-erythritol 2-phosphate + ADP + H(+). Its function is as follows. Catalyzes the phosphorylation of the position 2 hydroxy group of 4-diphosphocytidyl-2C-methyl-D-erythritol. The protein is Putative 4-diphosphocytidyl-2-C-methyl-D-erythritol kinase (ipk) of Streptococcus mutans serotype c (strain ATCC 700610 / UA159).